Reading from the N-terminus, the 216-residue chain is MEYKANKKLKIIMIGDYNSGKTAIFNEFAGRKFGIYTCPSTFDLFYKEIMIDDELVGYHFWDTAGQERFTSLNRHFYRNANCCVLCFDIHNEESFKNLDKWITELHSKCLENGLESEKLSPPFVLIGTKSDIPRTDKSISNERIEQWCKNIEDQRIIDKVHYFETSAKNSKNIKEPFNIISKFALNYFNSMQKLNESKLNPTLEISNNNNIKSSSC.

Residue 15-22 (GDYNSGKT) coordinates GTP. The short motif at 37–44 (TCPSTFDL) is the Effector region element. Residues 62–66 (DTAGQ) and 128–131 (TKSD) contribute to the GTP site. Residue cysteine 216 is the site of S-geranylgeranyl cysteine attachment.

Belongs to the small GTPase superfamily. Rab family.

The protein localises to the cell membrane. The sequence is that of Ras-related protein RabN1 (rabN1) from Dictyostelium discoideum (Social amoeba).